The sequence spans 365 residues: H-2 class I histocompatibility antigen, D-D alpha chain (365 aa).

A signal peptide spans 1-24 (MGAMAPRTLLLLLAAALGPTQTRA). The segment at 25-114 (GSHSLRYFVT…ALRYYNQSAG (90 aa)) is alpha-1. At 25 to 311 (GSHSLRYFVT…EPPSSTKTNT (287 aa)) the chain is on the extracellular side. Asn110 is a glycosylation site (N-linked (GlcNAc...) asparagine). The tract at residues 115–206 (GSHTLQWMAG…KNGNATLLRT (92 aa)) is alpha-2. Residues Cys125 and Cys188 are joined by a disulfide bond. N-linked (GlcNAc...) asparagine glycosylation occurs at Asn200. Positions 207–298 (DPPKAHVTHH…GLPEPLTLRW (92 aa)) are alpha-3. Residues 209–297 (PKAHVTHHRR…EGLPEPLTLR (89 aa)) enclose the Ig-like C1-type domain. Cys227 and Cys283 are joined by a disulfide. Residues 299–311 (GKEEPPSSTKTNT) form a connecting peptide region. The helical transmembrane segment at 312 to 334 (VIIAVPVVLGAVVILGAVMAFVM) threads the bilayer. At 335–365 (KRRRNTGGKGGDYALAPGSQSSDMSLPDCKV) the chain is on the cytoplasmic side. A disordered region spans residues 343-365 (KGGDYALAPGSQSSDMSLPDCKV). Ser356 and Ser359 each carry phosphoserine.

The protein belongs to the MHC class I family. As to quaternary structure, heterodimer of an alpha chain and a beta chain (beta-2-microglobulin).

It localises to the membrane. Functionally, involved in the presentation of foreign antigens to the immune system. This Mus musculus (Mouse) protein is H-2 class I histocompatibility antigen, D-D alpha chain (H2-D1).